Here is a 334-residue protein sequence, read N- to C-terminus: D-aspartate oxidase 1 (334 aa).

FAD contacts are provided by D35, R36, S43, G307, and T312. The Microbody targeting signal motif lies at 332-334 (SKL).

It belongs to the DAMOX/DASOX family. It depends on FAD as a cofactor. Expressed in the intestinal cells, hypodermis and in unidentified cells in the head in adult hermaphrodites.

It localises to the peroxisome matrix. The enzyme catalyses D-aspartate + O2 + H2O = oxaloacetate + H2O2 + NH4(+). The catalysed reaction is D-glutamate + O2 + H2O = H2O2 + 2-oxoglutarate + NH4(+). Not inhibited by potassium bromide or thiolactomycin. Its function is as follows. Selectively catalyzes the oxidative deamination of acidic amino acids. May play a role in the egg-laying events and early development of the worm, in addition to quality control of the germ cells. In Caenorhabditis elegans, this protein is D-aspartate oxidase 1 (ddo-1).